The following is a 246-amino-acid chain: DNA repair protein RecO (246 aa).

Belongs to the RecO family.

Its function is as follows. Involved in DNA repair and RecF pathway recombination. This chain is DNA repair protein RecO, found in Methylobacterium nodulans (strain LMG 21967 / CNCM I-2342 / ORS 2060).